The primary structure comprises 592 residues: Potassium-transporting ATPase potassium-binding subunit (592 aa).

11 helical membrane-spanning segments follow: residues 7–27 (LQTV…GTFM), 71–91 (VLFN…QHLL), 136–156 (GLTV…IAVI), 179–199 (LYIL…QGVI), 287–307 (LEIL…GAMV), 314–334 (WTLL…LQGV), 411–431 (GLYT…LMIG), 449–469 (SVVT…IAMI), 473–493 (AVAA…YAFA), 515–535 (ILGA…VLAM), and 559–579 (FALW…FPAL).

This sequence belongs to the KdpA family. As to quaternary structure, the system is composed of three essential subunits: KdpA, KdpB and KdpC.

The protein localises to the cell inner membrane. Functionally, part of the high-affinity ATP-driven potassium transport (or Kdp) system, which catalyzes the hydrolysis of ATP coupled with the electrogenic transport of potassium into the cytoplasm. This subunit binds the periplasmic potassium ions and delivers the ions to the membrane domain of KdpB through an intramembrane tunnel. In Geobacter sulfurreducens (strain ATCC 51573 / DSM 12127 / PCA), this protein is Potassium-transporting ATPase potassium-binding subunit.